The chain runs to 393 residues: S-adenosylmethionine synthase 1 (393 aa).

Glu9 provides a ligand contact to Mg(2+). His15 is a binding site for ATP. Glu43 provides a ligand contact to K(+). Residues Glu56 and Gln99 each coordinate L-methionine. ATP-binding positions include 167 to 169, 235 to 238, Asp246, 252 to 253, Ala269, Lys273, and Lys277; these read DGK, SGRF, and RK. Residue Asp246 participates in L-methionine binding. Residue Lys277 coordinates L-methionine.

It belongs to the AdoMet synthase family. As to quaternary structure, homotetramer. Mn(2+) is required as a cofactor. It depends on Mg(2+) as a cofactor. Co(2+) serves as cofactor. The cofactor is K(+). Requires NH4(+) as cofactor. As to expression, mostly expressed in roots, and, to a lower extent, in hypocotyls and cotyledons.

It is found in the cytoplasm. The enzyme catalyses L-methionine + ATP + H2O = S-adenosyl-L-methionine + phosphate + diphosphate. It functions in the pathway amino-acid biosynthesis; S-adenosyl-L-methionine biosynthesis; S-adenosyl-L-methionine from L-methionine: step 1/1. With respect to regulation, inhibited by products of SAMS reaction (SAM, Pi, PPi), substrate analogs (cycloleucine and ethionine), and alternative nucleotides (GTP, CTP and ADP). Strongly repressed by PPPi. Its function is as follows. Catalyzes the formation of S-adenosylmethionine from methionine and ATP. The reaction comprises two steps that are both catalyzed by the same enzyme: formation of S-adenosylmethionine (AdoMet) and triphosphate, and subsequent hydrolysis of the triphosphate. The polypeptide is S-adenosylmethionine synthase 1 (SAMS1) (Catharanthus roseus (Madagascar periwinkle)).